An 81-amino-acid polypeptide reads, in one-letter code: Putative defensin-like protein 25 (81 aa).

The first 23 residues, 1-23, serve as a signal peptide directing secretion; it reads MASLKVFSFALILVLTFSVDVEG. Cystine bridges form between Cys-33-Cys-81, Cys-43-Cys-68, Cys-52-Cys-77, and Cys-56-Cys-79.

Belongs to the DEFL family.

Its subcellular location is the secreted. In Arabidopsis thaliana (Mouse-ear cress), this protein is Putative defensin-like protein 25.